The sequence spans 74 residues: U4-theraphotoxin-Cg1a (74 aa).

The signal sequence occupies residues 1–19; sequence MNATIFAFLLLLNLAMHNA. Positions 20–39 are excised as a propeptide; that stretch reads TEQSSETDMDDTLLIPEINR. Cystine bridges form between Cys-42–Cys-56, Cys-49–Cys-61, and Cys-55–Cys-71.

Belongs to the neurotoxin 36 family. 01 subfamily. In terms of tissue distribution, expressed by the venom gland.

The protein localises to the secreted. Probable ion channel inhibitor. This Chilobrachys guangxiensis (Chinese earth tiger tarantula) protein is U4-theraphotoxin-Cg1a.